Consider the following 292-residue polypeptide: Ribosomal RNA small subunit methyltransferase A (292 aa).

Positions 28, 30, 55, 76, 101, and 126 each coordinate S-adenosyl-L-methionine.

The protein belongs to the class I-like SAM-binding methyltransferase superfamily. rRNA adenine N(6)-methyltransferase family. RsmA subfamily.

The protein resides in the cytoplasm. It carries out the reaction adenosine(1518)/adenosine(1519) in 16S rRNA + 4 S-adenosyl-L-methionine = N(6)-dimethyladenosine(1518)/N(6)-dimethyladenosine(1519) in 16S rRNA + 4 S-adenosyl-L-homocysteine + 4 H(+). Functionally, specifically dimethylates two adjacent adenosines (A1518 and A1519) in the loop of a conserved hairpin near the 3'-end of 16S rRNA in the 30S particle. May play a critical role in biogenesis of 30S subunits. The protein is Ribosomal RNA small subunit methyltransferase A of Bacillus cytotoxicus (strain DSM 22905 / CIP 110041 / 391-98 / NVH 391-98).